Reading from the N-terminus, the 260-residue chain is Ubiquinone/menaquinone biosynthesis C-methyltransferase UbiE (260 aa).

S-adenosyl-L-methionine-binding positions include Thr-83, Asp-104, and 132–133; that span reads NA.

Belongs to the class I-like SAM-binding methyltransferase superfamily. MenG/UbiE family.

The catalysed reaction is a 2-demethylmenaquinol + S-adenosyl-L-methionine = a menaquinol + S-adenosyl-L-homocysteine + H(+). It carries out the reaction a 2-methoxy-6-(all-trans-polyprenyl)benzene-1,4-diol + S-adenosyl-L-methionine = a 5-methoxy-2-methyl-3-(all-trans-polyprenyl)benzene-1,4-diol + S-adenosyl-L-homocysteine + H(+). The protein operates within quinol/quinone metabolism; menaquinone biosynthesis; menaquinol from 1,4-dihydroxy-2-naphthoate: step 2/2. It functions in the pathway cofactor biosynthesis; ubiquinone biosynthesis. Functionally, methyltransferase required for the conversion of demethylmenaquinol (DMKH2) to menaquinol (MKH2) and the conversion of 2-polyprenyl-6-methoxy-1,4-benzoquinol (DDMQH2) to 2-polyprenyl-3-methyl-6-methoxy-1,4-benzoquinol (DMQH2). The chain is Ubiquinone/menaquinone biosynthesis C-methyltransferase UbiE from Bartonella quintana (strain Toulouse) (Rochalimaea quintana).